A 271-amino-acid polypeptide reads, in one-letter code: Acyl-[acyl-carrier-protein]--UDP-N-acetylglucosamine O-acyltransferase (271 aa).

The protein belongs to the transferase hexapeptide repeat family. LpxA subfamily. In terms of assembly, homotrimer.

The protein localises to the cytoplasm. It catalyses the reaction a (3R)-hydroxyacyl-[ACP] + UDP-N-acetyl-alpha-D-glucosamine = a UDP-3-O-[(3R)-3-hydroxyacyl]-N-acetyl-alpha-D-glucosamine + holo-[ACP]. The protein operates within glycolipid biosynthesis; lipid IV(A) biosynthesis; lipid IV(A) from (3R)-3-hydroxytetradecanoyl-[acyl-carrier-protein] and UDP-N-acetyl-alpha-D-glucosamine: step 1/6. Functionally, involved in the biosynthesis of lipid A, a phosphorylated glycolipid that anchors the lipopolysaccharide to the outer membrane of the cell. The polypeptide is Acyl-[acyl-carrier-protein]--UDP-N-acetylglucosamine O-acyltransferase (Azorhizobium caulinodans (strain ATCC 43989 / DSM 5975 / JCM 20966 / LMG 6465 / NBRC 14845 / NCIMB 13405 / ORS 571)).